Consider the following 196-residue polypeptide: dITP/XTP pyrophosphatase (196 aa).

Substrate is bound at residue 7-12; it reads THNPGK. The Mg(2+) site is built by Asp40 and Asp69. Catalysis depends on Asp69, which acts as the Proton acceptor. Substrate contacts are provided by residues Ser70, 150–153, Lys173, and 178–179; these read FGYD and HR.

It belongs to the HAM1 NTPase family. In terms of assembly, homodimer. The cofactor is Mg(2+).

It carries out the reaction XTP + H2O = XMP + diphosphate + H(+). It catalyses the reaction dITP + H2O = dIMP + diphosphate + H(+). The enzyme catalyses ITP + H2O = IMP + diphosphate + H(+). Pyrophosphatase that catalyzes the hydrolysis of nucleoside triphosphates to their monophosphate derivatives, with a high preference for the non-canonical purine nucleotides XTP (xanthosine triphosphate), dITP (deoxyinosine triphosphate) and ITP. Seems to function as a house-cleaning enzyme that removes non-canonical purine nucleotides from the nucleotide pool, thus preventing their incorporation into DNA/RNA and avoiding chromosomal lesions. This chain is dITP/XTP pyrophosphatase, found in Exiguobacterium sp. (strain ATCC BAA-1283 / AT1b).